The primary structure comprises 847 residues: Nitrite reductase (NADH) large subunit (847 aa).

44–79 is an FAD binding site; the sequence is YDRVHLSSYFSHHTAEELSLVREGFYEKHGIKVLVG. Residue 193 to 225 participates in NAD(+) binding; that stretch reads LRRKIESMGVRVHTSKNTLEIVQEGVEARKTMR. Residues C425, C427, C459, and C462 each coordinate [2Fe-2S] cluster. Residues C641, C647, C681, and C685 each coordinate [4Fe-4S] cluster. Residue C685 coordinates siroheme.

This sequence belongs to the nitrite and sulfite reductase 4Fe-4S domain family. In terms of assembly, homodimer which associates with NirD. The cofactor is siroheme. It depends on [2Fe-2S] cluster as a cofactor. Requires [4Fe-4S] cluster as cofactor. FAD serves as cofactor.

The enzyme catalyses NH4(+) + 3 NAD(+) + 2 H2O = nitrite + 3 NADH + 5 H(+). It participates in nitrogen metabolism; nitrate reduction (assimilation). In Escherichia coli (strain K12), this protein is Nitrite reductase (NADH) large subunit (nirB).